Reading from the N-terminus, the 393-residue chain is Sugar efflux transporter B (393 aa).

12 helical membrane passes run 13 to 33 (FDLT…AGAL), 52 to 72 (MVGF…QFLA), 84 to 101 (LIVF…LFAW), 105 to 124 (YFIL…TANP), 152 to 172 (VSLA…GFSF), 174 to 194 (VMYL…WFFL), 219 to 239 (LLLF…IINM), 253 to 273 (LAGV…LIAG), 283 to 303 (LLMC…LLAH), 308 to 328 (LLGL…IGML), 344 to 364 (LYTN…GIAA), and 366 to 386 (IWNY…TMFC).

It belongs to the major facilitator superfamily. Set transporter family.

It localises to the cell inner membrane. Involved in the efflux of sugars. The physiological role may be the detoxification of non-metabolizable sugar analogs. Can transport lactose and glucose. The polypeptide is Sugar efflux transporter B (setB) (Salmonella typhimurium (strain LT2 / SGSC1412 / ATCC 700720)).